The following is a 280-amino-acid chain: Ribosomal RNA small subunit methyltransferase I (280 aa).

Belongs to the methyltransferase superfamily. RsmI family.

It is found in the cytoplasm. It catalyses the reaction cytidine(1402) in 16S rRNA + S-adenosyl-L-methionine = 2'-O-methylcytidine(1402) in 16S rRNA + S-adenosyl-L-homocysteine + H(+). Catalyzes the 2'-O-methylation of the ribose of cytidine 1402 (C1402) in 16S rRNA. This chain is Ribosomal RNA small subunit methyltransferase I, found in Rickettsia prowazekii (strain Madrid E).